Here is a 195-residue protein sequence, read N- to C-terminus: Ciliary neurotrophic factor (195 aa).

It belongs to the CNTF family. Nervous system.

The protein localises to the cytoplasm. CNTF is a survival factor for various neuronal cell types. Seems to prevent the degeneration of motor axons after axotomy. This Gallus gallus (Chicken) protein is Ciliary neurotrophic factor (CNTF).